Here is a 378-residue protein sequence, read N- to C-terminus: Ribosomal RNA large subunit methyltransferase G (378 aa).

The protein belongs to the methyltransferase superfamily. RlmG family.

It is found in the cytoplasm. The enzyme catalyses guanosine(1835) in 23S rRNA + S-adenosyl-L-methionine = N(2)-methylguanosine(1835) in 23S rRNA + S-adenosyl-L-homocysteine + H(+). Its function is as follows. Specifically methylates the guanine in position 1835 (m2G1835) of 23S rRNA. This Salmonella arizonae (strain ATCC BAA-731 / CDC346-86 / RSK2980) protein is Ribosomal RNA large subunit methyltransferase G.